The sequence spans 231 residues: Uracil-DNA glycosylase (231 aa).

Asp-74 serves as the catalytic Proton acceptor.

The protein belongs to the uracil-DNA glycosylase (UDG) superfamily. UNG family.

It localises to the cytoplasm. The enzyme catalyses Hydrolyzes single-stranded DNA or mismatched double-stranded DNA and polynucleotides, releasing free uracil.. Functionally, excises uracil residues from the DNA which can arise as a result of misincorporation of dUMP residues by DNA polymerase or due to deamination of cytosine. This chain is Uracil-DNA glycosylase, found in Campylobacter jejuni subsp. jejuni serotype O:23/36 (strain 81-176).